A 397-amino-acid chain; its full sequence is uncharacterized protein (397 aa).

10 helical membrane-spanning segments follow: residues 2–24, 44–66, 92–114, 124–143, 150–169, 173–195, 255–277, 297–319, 331–350, and 354–373; these read LNLLYLILGIICGTITGLFPGIH, YIPFLIGLVITHYFINFIPSAFL, AIVLAGFGSYLGVVFSILISLFL, AFYCSIKIFIPFILIAFILY, SVWEVLVIFLSGIFGIAVLY, AFNITLTAIFTGMFGIPLLINNL, FIVSQGSIILSNEVFSLLAVIFI, INTAIFSILISSTIAIIILLNLS, FKFLSLFFIIFCSLVVIIGS, and YLIYHIIVYLTAIYIGLLAV.

Its subcellular location is the cell membrane. This is an uncharacterized protein from Methanocaldococcus jannaschii (strain ATCC 43067 / DSM 2661 / JAL-1 / JCM 10045 / NBRC 100440) (Methanococcus jannaschii).